The chain runs to 180 residues: Large ribosomal subunit protein uL5c (180 aa).

This sequence belongs to the universal ribosomal protein uL5 family. Part of the 50S ribosomal subunit; contacts the 5S rRNA.

It is found in the plastid. It localises to the chloroplast. In terms of biological role, binds 5S rRNA, forms part of the central protuberance of the 50S subunit. This chain is Large ribosomal subunit protein uL5c (rpl5), found in Tetradesmus obliquus (Green alga).